Reading from the N-terminus, the 195-residue chain is uncharacterized protein (195 aa).

Positions 1-21 are cleaved as a signal peptide; sequence MHFSSCVLVSALAIVTNVATA. N62 and N109 each carry an N-linked (GlcNAc...) asparagine glycan. The segment at 119-141 is disordered; that stretch reads DWDEDTVTGENAPDSGEPFSTSH.

Its subcellular location is the secreted. This is an uncharacterized protein from Arthroderma benhamiae (strain ATCC MYA-4681 / CBS 112371) (Trichophyton mentagrophytes).